Here is an 83-residue protein sequence, read N- to C-terminus: uncharacterized protein (83 aa).

This is an uncharacterized protein from Acidianus bottle-shaped virus (isolate Italy/Pozzuoli) (ABV).